We begin with the raw amino-acid sequence, 245 residues long: MKKILAEIAYDGSLYYGFQIQPTKPTIQGEIEKALEKISKTKVKVHSAGRTDKGVHARGQIISFYIRINIKLKNLKTAINSLLRKDIRIIKLKYVADEFQPRFNAKRRKYSYYILNNENHYPWEGYQAYYVKKKLNINRLNEMAKMLIGIHDFTTFSCIKDQTNSKLKKIYFARFKKKNKLIIFEIIGSSFLWKMVRSIVGTIIDIEIKNEPVYTFKKILNSKNRKFTRTTAPAKALFLDKVFYE.

The Nucleophile role is filled by Asp52. Tyr110 lines the substrate pocket.

Belongs to the tRNA pseudouridine synthase TruA family. Homodimer.

The enzyme catalyses uridine(38/39/40) in tRNA = pseudouridine(38/39/40) in tRNA. In terms of biological role, formation of pseudouridine at positions 38, 39 and 40 in the anticodon stem and loop of transfer RNAs. This chain is tRNA pseudouridine synthase A, found in Borrelia hermsii (strain HS1 / DAH).